The sequence spans 128 residues: MALSKAEILDAIASLTVLELSELIKDLEEKFGVSAAAAAVAVAAPAAGGGDAGAAAAEKTEFDVILASAGDNKVNVIKAVRELTSLGLKEAKDLVDAAPKAIKEGVSKADAEAAAKKLEEAGAKAEIK.

The protein belongs to the bacterial ribosomal protein bL12 family. As to quaternary structure, homodimer. Part of the ribosomal stalk of the 50S ribosomal subunit. Forms a multimeric L10(L12)X complex, where L10 forms an elongated spine to which 2 to 4 L12 dimers bind in a sequential fashion. Binds GTP-bound translation factors.

Forms part of the ribosomal stalk which helps the ribosome interact with GTP-bound translation factors. Is thus essential for accurate translation. This chain is Large ribosomal subunit protein bL12, found in Methylobacillus flagellatus (strain ATCC 51484 / DSM 6875 / VKM B-1610 / KT).